The chain runs to 327 residues: tRNA(Ile)-lysidine synthase (327 aa).

32–37 (SGGQDS) is a binding site for ATP.

The protein belongs to the tRNA(Ile)-lysidine synthase family.

The protein resides in the cytoplasm. It catalyses the reaction cytidine(34) in tRNA(Ile2) + L-lysine + ATP = lysidine(34) in tRNA(Ile2) + AMP + diphosphate + H(+). In terms of biological role, ligates lysine onto the cytidine present at position 34 of the AUA codon-specific tRNA(Ile) that contains the anticodon CAU, in an ATP-dependent manner. Cytidine is converted to lysidine, thus changing the amino acid specificity of the tRNA from methionine to isoleucine. This chain is tRNA(Ile)-lysidine synthase, found in Synechococcus sp. (strain JA-2-3B'a(2-13)) (Cyanobacteria bacterium Yellowstone B-Prime).